We begin with the raw amino-acid sequence, 431 residues long: Cyclin-B2-4 (431 aa).

Residues 1 to 30 form a disordered region; sequence MGGSDENRHGVIGPMNRQQGGLRGGKVIPT.

Belongs to the cyclin family. Cyclin AB subfamily. As to quaternary structure, interacts with SMR11.

The sequence is that of Cyclin-B2-4 (CYCB2-4) from Arabidopsis thaliana (Mouse-ear cress).